Here is a 452-residue protein sequence, read N- to C-terminus: COP9 signalosome complex subunit 11 (452 aa).

The 170-residue stretch at 205 to 374 (FYIEDPKTMM…ISYSKRSIVD (170 aa)) folds into the PCI domain.

In terms of assembly, component of a COP9 signalosome-like (CSN) complex.

The protein resides in the cytoplasm. It localises to the nucleus. Component of the COP9 signalosome (CSN) complex that acts as an regulator of the ubiquitin (Ubl) conjugation pathway by mediating the deneddylation of the cullin subunit of SCF-type E3 ubiquitin-protein ligase complexes The CSN complex is involved in the regulation of the mating pheromone response. PCI8 may also be involved in transcriptional and translational control. The polypeptide is COP9 signalosome complex subunit 11 (PCI8) (Candida glabrata (strain ATCC 2001 / BCRC 20586 / JCM 3761 / NBRC 0622 / NRRL Y-65 / CBS 138) (Yeast)).